The following is a 254-amino-acid chain: Imidazole glycerol phosphate synthase subunit HisF (254 aa).

Catalysis depends on residues Asp-11 and Asp-130.

It belongs to the HisA/HisF family. Heterodimer of HisH and HisF.

The protein localises to the cytoplasm. It catalyses the reaction 5-[(5-phospho-1-deoxy-D-ribulos-1-ylimino)methylamino]-1-(5-phospho-beta-D-ribosyl)imidazole-4-carboxamide + L-glutamine = D-erythro-1-(imidazol-4-yl)glycerol 3-phosphate + 5-amino-1-(5-phospho-beta-D-ribosyl)imidazole-4-carboxamide + L-glutamate + H(+). The protein operates within amino-acid biosynthesis; L-histidine biosynthesis; L-histidine from 5-phospho-alpha-D-ribose 1-diphosphate: step 5/9. IGPS catalyzes the conversion of PRFAR and glutamine to IGP, AICAR and glutamate. The HisF subunit catalyzes the cyclization activity that produces IGP and AICAR from PRFAR using the ammonia provided by the HisH subunit. The chain is Imidazole glycerol phosphate synthase subunit HisF from Oceanobacillus iheyensis (strain DSM 14371 / CIP 107618 / JCM 11309 / KCTC 3954 / HTE831).